The primary structure comprises 679 residues: MDHLLLKTQTQTEQVMNVTNPNSIYIKGRLYFKGYKKIELHCFVDTGASLCIASKFVIPEEHWVNAERPIMVKIADGSSITISKVCKDIDLIIAGEIFRIPTVYQQESGIDFIIGNNFCQLYEPFIQFTDRVIFTKNKSYPVHIAKLTRAVRVGTEGFLESMKKRSKTQQPEPVNISTNKIENPLEEIAILSEGRRLSEEKLFITQQRMQKIEELLEKVCSENPLDPNKTKQWMKASIKLSDPSKAIKVKPMKYSPMDREEFDKQIKELLDLKVIKPSKSPHMAPAFLVNNEAEKRRGKKRMVVNYKAMNKATVGDAYNLPNKDELLTLIRGKKIFSSFDCKSGFWQVLLDQESRPLTAFTCPQGHYEWNVVPFGLKQAPSIFQRHMDEAFRVFRKFCCVYVDDILVFSNNEEDHLLHVAMILQKCNQHGIILSKKKAQLFKKKINFLGLEIDEGTHKPQGHILEHINKFPDTLEDKKQLQRFLGILTYASDYIPKLAQIRKPLQAKLKENVPWRWTKEDTLYMQKVKKNLQGFPPLHHPLPEEKLIIETDASDDYWGGMLKAIKINEGTNTELICRYASGSFKAAEKNYHSNDKETLAVINTIKKFSIYLTPVHFLIRTDNTHFKSFVNLNYKGDSKLGRNIRWQAWLSHYSFDVEHIKGTDNHFADFLSREFNKVNS.

Residues leucine 40–aspartate 130 form a protease region. Residue aspartate 45 is part of the active site. Positions leucine 272–isoleucine 452 constitute a Reverse transcriptase domain.

It belongs to the caulimoviridae enzymatic polyprotein family.

It catalyses the reaction DNA(n) + a 2'-deoxyribonucleoside 5'-triphosphate = DNA(n+1) + diphosphate. Its function is as follows. Encodes for at least two polypeptides: protease (PR) and reverse transcriptase (RT). The protease processes the polyprotein in cis. Reverse transcriptase is multifunctional enzyme that converts the viral RNA genome into dsDNA in viral cytoplasmic capsids. This enzyme displays a DNA polymerase activity that can copy either DNA or RNA templates, and a ribonuclease H (RNase H) activity that cleaves the RNA strand of RNA-DNA heteroduplexes in a partially processive 3'- to 5'-endonucleasic mode. Neo-synthesized pregenomic RNA (pgRNA) are encapsidated, and reverse-transcribed inside the nucleocapsid. Partial (+)DNA is synthesized from the (-)DNA template and generates the relaxed circular DNA (RC-DNA) genome. After budding and infection, the RC-DNA migrates in the nucleus, and is converted into a plasmid-like covalently closed circular DNA (cccDNA). The chain is Enzymatic polyprotein from Arabidopsis thaliana (Mouse-ear cress).